Here is a 408-residue protein sequence, read N- to C-terminus: Putative gustatory receptor 98c (408 aa).

Residues 1–42 (MEMEAKRSRLLTTARPYLQVLSLFGLTPPAEFFTRTLRKRRR) are Cytoplasmic-facing. A helical membrane pass occupies residues 43–63 (FCWMAGYSLYLIAILLMVFYE). The Extracellular segment spans residues 64-92 (FHANIVSLHLEIYKFHVEDFSKVMGRTQK). The helical transmembrane segment at 93 to 113 (FLIVAIATCNQLNILLNYGRL) threads the bilayer. Topologically, residues 114 to 146 (GLIYDEIANLDLGIDKSSKNFCGKSHWWSFRLR) are cytoplasmic. Residues 147-167 (LTLSIGLWMVIIIGVIPRLTL) traverse the membrane as a helical segment. At 168–183 (GRAGPFFHWVNQVLTQ) the chain is on the extracellular side. A helical membrane pass occupies residues 184 to 204 (IILIMLQLKGPEYCLFVLLVY). At 205–261 (ELILRTRHVLEQLKDDLEDFDCGARIQELCVTLKQNQLLIGRIWRLVDEIGAYFRWS) the chain is on the cytoplasmic side. Residues 262 to 282 (MTLLFLYNGLTILHVVNWAII) form a helical membrane-spanning segment. Residues 283–296 (RSIDPNDCCQLNRL) lie on the Extracellular side of the membrane. A helical transmembrane segment spans residues 297-317 (GSITFLSFNLLLTCFFSECCV). At 318–367 (KTYNSISYILHQIGCLPTAEEFQMLKMGLKEYILQMQHLKLLFTCGGLFD) the chain is on the cytoplasmic side. The chain crosses the membrane as a helical span at residues 368–388 (INIKLFGGMLVTLCGYVIIIV). At 389–408 (QFKIQDFALIGYRQNTSDTS) the chain is on the extracellular side. An N-linked (GlcNAc...) asparagine glycan is attached at Asn-403.

It belongs to the insect chemoreceptor superfamily. Gustatory receptor (GR) family. Gr2a subfamily.

It localises to the cell membrane. Functionally, probable gustatory receptor which mediates acceptance or avoidance behavior, depending on its substrates. The sequence is that of Putative gustatory receptor 98c (Gr98c) from Drosophila melanogaster (Fruit fly).